The primary structure comprises 135 residues: Fluoride-specific ion channel FluC (135 aa).

Transmembrane regions (helical) follow at residues 7 to 27 (IAAI…LGLA), 37 to 57 (IGTL…IAYV), 70 to 90 (FMIT…AELF), and 105 to 125 (LGLH…TIGL). Na(+) is bound by residues Gly-77 and Ser-80.

Belongs to the fluoride channel Fluc/FEX (TC 1.A.43) family.

It is found in the cell inner membrane. The catalysed reaction is fluoride(in) = fluoride(out). Its activity is regulated as follows. Na(+) is not transported, but it plays an essential structural role and its presence is essential for fluoride channel function. Fluoride-specific ion channel. Important for reducing fluoride concentration in the cell, thus reducing its toxicity. This is Fluoride-specific ion channel FluC from Xanthomonas oryzae pv. oryzae (strain MAFF 311018).